A 465-amino-acid chain; its full sequence is SET domain-containing protein 3 (465 aa).

In terms of domain architecture, SET spans 18 to 265 (DKVTVKWDKK…AREELLDSYG (248 aa)).

This sequence belongs to the class V-like SAM-binding methyltransferase superfamily.

The protein is SET domain-containing protein 3 (set-3) of Caenorhabditis elegans.